The following is a 300-amino-acid chain: Transcription factor E2F5 (300 aa).

Residues 2-73 (GSSRHEKSLG…KNSIQWKGVG (72 aa)) mediate DNA binding. A leucine-zipper region spans residues 31–53 (LKAAADTLAVRQKRRIYDITNVL). The DEF box signature appears at 36 to 73 (DTLAVRQKRRIYDITNVLEGIDLIEKKSKNSIQWKGVG). The tract at residues 74–170 (AGCNTKEVID…GQNGQKKYQI (97 aa)) is dimerization. The interval 191-250 (SKPVVFPVPPPDDLTQPSSQSSTSVTPPKSTMAAQNLPEQHVSERSQNFQQTPATEISSG) is disordered. Residues 203 to 221 (DLTQPSSQSSTSVTPPKST) show a composition bias toward low complexity. The span at 235 to 246 (RSQNFQQTPATE) shows a compositional bias: polar residues. The segment at 242-300 (TPATEISSGSISGDIIDELMSSDVFPLLRLSPTPADDYNFNLDDNEGVCDLFDVQILNY) is transactivation. An RBL2 association region spans residues 277–294 (DDYNFNLDDNEGVCDLFD).

Belongs to the E2F/DP family. In terms of assembly, component of the DRTF1/E2F transcription factor complex. Binds cooperatively with DP-1 to E2F sites. Interaction with retinoblastoma protein RB1 or proteins RBL1 and RBL2 inhibits the E2F transactivation domain. Component of the DREAM complex (also named LINC complex) at least composed of E2F4, E2F5, LIN9, LIN37, LIN52, LIN54, MYBL1, MYBL2, RBL1, RBL2, RBBP4, TFDP1 and TFDP2. The complex exists in quiescent cells where it represses cell cycle-dependent genes. It dissociates in S phase when LIN9, LIN37, LIN52 and LIN54 form a subcomplex that binds to MYBL2. As to expression, found in placenta followed by kidney, lung and brain.

The protein resides in the nucleus. Its function is as follows. Transcriptional activator that binds to E2F sites, these sites are present in the promoter of many genes whose products are involved in cell proliferation. May mediate growth factor-initiated signal transduction. It is likely involved in the early responses of resting cells to growth factor stimulation. Specifically required for multiciliate cell differentiation: together with MCIDAS and E2F5, binds and activate genes required for centriole biogenesis. This Rattus norvegicus (Rat) protein is Transcription factor E2F5 (E2f5).